The chain runs to 308 residues: MSRRRRGQAIHGWLAIDKPVGITSTDVVNRLRRTMDAAKVGHGGTLDPLASGVLPIAFGEATKTVSYVMDGTKVYHMVVGWGEARDTDDREGKVIDTSDVRPDAQAITAMLARFTGEIEQVPPIYSAVKVEGRRSYDLARADQAVELKSRKILIKDLTLLETSTPDFGHFRIVSGKGAYMRSLARDLALALGTVGHVVALRRLACGPFTAETAISLDMVDALGHDAPHSESLLPIEAALADIPAVPLTEAEARRLSQGQPVSLLHLASRTPLNGLAQGETVQALLNGKLVALAKIVEGEIRPLRVVNL.

Asp-47 (nucleophile) is an active-site residue.

It belongs to the pseudouridine synthase TruB family. Type 1 subfamily.

The enzyme catalyses uridine(55) in tRNA = pseudouridine(55) in tRNA. Functionally, responsible for synthesis of pseudouridine from uracil-55 in the psi GC loop of transfer RNAs. The polypeptide is tRNA pseudouridine synthase B (Rhodospirillum rubrum (strain ATCC 11170 / ATH 1.1.1 / DSM 467 / LMG 4362 / NCIMB 8255 / S1)).